We begin with the raw amino-acid sequence, 1911 residues long: Adenylate kinase 9 (1911 aa).

An adenylate kinase 1 region spans residues 31 to 285 (VCFVVFGKPG…LFMIVMDRLK (255 aa)). 40–45 (GVGKTT) serves as a coordination point for ATP. Positions 60–89 (EALPILEEQIAAETESGVMLQSMLISGQSI) are NMP 1. Residues 87–89 (QSI) and 116–119 (EIPS) contribute to the AMP site. The LID 1 stretch occupies residues 160–205 (GQRQHNNTGYIYSRDQWDPEVIENHRKKKKEAQKDGKGEEEEEEEE). Residues 185 to 210 (RKKKKEAQKDGKGEEEEEEEEQEEEE) are disordered. A compositionally biased stretch (acidic residues) spans 197–210 (GEEEEEEEEQEEEE). An AMP-binding site is contributed by Arg-229. Coiled coils occupy residues 443–485 (AEAT…EFGV) and 676–711 (LQKK…TEEE). Disordered stretches follow at residues 728–796 (KAKE…TEIP) and 892–926 (DYEE…KERK). Acidic residues predominate over residues 733–750 (EETDNEDEEEIEGDELEV). Basic and acidic residues predominate over residues 751-761 (HEEPEASHDTR). Acidic residues-rich tracts occupy residues 767–791 (EEFE…ETTV) and 892–919 (DYEE…EEGE). Adenylate kinase stretches follow at residues 992-1203 (LRIC…ELIL) and 1412-1601 (IRII…KNVQ). 1001 to 1006 (GSGKTM) is a binding site for ATP. The segment at 1021–1052 (QFEEVLQEKLLLKTEKKVGPEFEEDSENEQAA) is NMP 2. Residues 1050 to 1052 (QAA) and 1079 to 1082 (VQLT) contribute to the AMP site. Residues 1124–1144 (DGFPRYPEEAQFLGDRGFFPD) are LID 2. ATP is bound at residue 1421-1426 (KSGKTT). The segment at 1441 to 1472 (SIGGALRYVLNNHPETELALMLNWHLHKGMTA) is NMP 3. AMP-binding positions include Arg-1447, 1470–1472 (MTA), 1499–1502 (GYPV), Gln-1506, and Arg-1543. The tract at residues 1536–1550 (LEKENEQRLPYPLHN) is LID 3.

Belongs to the adenylate kinase family.

It is found in the cytoplasm. Its subcellular location is the nucleus. The protein localises to the cell projection. It localises to the cilium. The protein resides in the flagellum. It catalyses the reaction a ribonucleoside 5'-phosphate + ATP = a ribonucleoside 5'-diphosphate + ADP. It carries out the reaction AMP + ATP = 2 ADP. The catalysed reaction is GTP + AMP = GDP + ADP. The enzyme catalyses CMP + ATP = CDP + ADP. It catalyses the reaction GTP + CMP = CDP + GDP. It carries out the reaction dAMP + ATP = dADP + ADP. The catalysed reaction is dCMP + ATP = dCDP + ADP. The enzyme catalyses a ribonucleoside 5'-diphosphate + ATP = a ribonucleoside 5'-triphosphate + ADP. It catalyses the reaction CDP + ATP = CTP + ADP. It carries out the reaction CDP + GTP = CTP + GDP. The catalysed reaction is GDP + ATP = GTP + ADP. The enzyme catalyses UDP + ATP = UTP + ADP. It catalyses the reaction GTP + UDP = UTP + GDP. It carries out the reaction dTDP + GTP = dTTP + GDP. The catalysed reaction is dCDP + ATP = dCTP + ADP. The enzyme catalyses dCDP + GTP = dCTP + GDP. It catalyses the reaction dGDP + ATP = dGTP + ADP. It carries out the reaction dTDP + ATP = dTTP + ADP. The catalysed reaction is dADP + GTP = dATP + GDP. Broad-specificity nucleoside phosphate kinase involved in cellular nucleotide homeostasis by catalyzing nucleoside-phosphate interconversions. Similar to other adenylate kinases, preferentially catalyzes the phosphorylation of the nucleoside monophosphate AMP with ATP as phosphate donor to produce ADP. In vitro, can also catalyze the phosphorylation of CMP, dAMP and dCMP and use GTP as an alternate phosphate donor. Moreover, exhibits a diphosphate kinase activity, producing ATP, CTP, GTP, UTP, TTP, dATP, dCTP and dGTP from the corresponding diphosphate substrates with either ATP or GTP as phosphate donors. For this activity shows the following substrate preference CDP &gt; UDP &gt; ADP &gt; TDP. The chain is Adenylate kinase 9 from Homo sapiens (Human).